We begin with the raw amino-acid sequence, 134 residues long: UPF0756 membrane protein YeaL (134 aa).

Transmembrane regions (helical) follow at residues 14–34, 51–71, 86–106, and 110–130; these read ALGFISHNTTVAVSILVLIIV, LTVGIIILTIGVMAPIASGTL, LVAIAVGVFVSWLGGRGITLM, and PQLVAGLLVGTVLGVALFRGV.

It belongs to the UPF0756 family.

It localises to the cell membrane. The protein is UPF0756 membrane protein YeaL of Salmonella typhimurium (strain LT2 / SGSC1412 / ATCC 700720).